Consider the following 370-residue polypeptide: Protein SHI RELATED SEQUENCE 1 (370 aa).

The segment at 1 to 37 is disordered; that stretch reads MAGFFSLDGGGGGGGGGGNNQEDHRSNTNPPPPVSEA. A compositionally biased stretch (gly residues) spans 8–19; the sequence is DGGGGGGGGGGN. Zn(2+)-binding residues include Cys144, Cys147, Cys155, Cys160, Cys164, and Cys171. Positions 144–171 form a DNA-binding region, zn(2)-C6 fungal-type; degenerate; that stretch reads CQDCGNQAKKDCSHMRCRTCCKSRGFEC. A Required for homo- and heterodimerization motif is present at residues 271-274; sequence IGGH.

It belongs to the SHI protein family. As to quaternary structure, forms homodimers and heterodimers with LRP1. In terms of tissue distribution, expressed in flowers, seeds and seedlings.

It localises to the nucleus. Its function is as follows. Transcription activator that binds DNA on 5'-ACTCTAC-3' and promotes auxin homeostasis-regulating gene expression (e.g. YUC genes), as well as genes affecting stamen development, cell expansion and timing of flowering. Synergistically with other SHI-related proteins, regulates gynoecium, stamen and leaf development in a dose-dependent manner, controlling apical-basal patterning. Promotes style and stigma formation, and influences vascular development during gynoecium development. May also have a role in the formation and/or maintenance of the shoot apical meristem (SAM). The protein is Protein SHI RELATED SEQUENCE 1 (SRS1) of Arabidopsis thaliana (Mouse-ear cress).